We begin with the raw amino-acid sequence, 330 residues long: MTKIMFFGTRDYEKEMALNWGKKNNVEVTTSKELLSSATVDQLKDYDGVTTMQFGKLEDDVYPKLESYGIKQIAQRTAGFDMYDLDLAKKHNIVISNVPSYSPETIAEYSVSIALQLVRRFPDIERRVQAHDFTWQAEIMSKPVKNMTVAIIGTGRIGAATAKIYAGFGATITAYDAYPNKDLDFLTYKDSVKEAIKDADIISLHVPANKESYHLFDKAMFDHVKKGAILVNAARGAVINTPDLIAAVNDGTLLGAAIDTYENEAAYFTNDWTNKDIDDKTLLELIEHERILVTPHIAFFSDEAVQNLVEGGLNAALSVINTSTCETRLN.

Residues 156 to 157 (RI), Asp-176, 206 to 207 (VP), 233 to 235 (AAR), and Asp-259 each bind NAD(+). The active site involves Arg-235. Residue Glu-264 is part of the active site. The active-site Proton donor is His-296.

The protein belongs to the D-isomer specific 2-hydroxyacid dehydrogenase family.

It catalyses the reaction (R)-lactate + NAD(+) = pyruvate + NADH + H(+). The protein is D-lactate dehydrogenase (ldhD) of Staphylococcus aureus (strain MSSA476).